The sequence spans 97 residues: MFCVLKFLSCTLSRINIVQKLSDAAVPPKKAAPKKAVAKKTPAKKTAKKPAVKKPAAKKRAAPKKKPAAAKKAVTKSAKKHAAKKAPKKAVKKAPKK.

The interval 24-97 (AAVPPKKAAP…KKAVKKAPKK (74 aa)) is disordered. The segment covering 31-97 (AAPKKAVAKK…KKAVKKAPKK (67 aa)) has biased composition (basic residues).

It is found in the nucleus. The protein resides in the chromosome. This Trypanosoma cruzi protein is Histone H1.C2.